A 615-amino-acid chain; its full sequence is Protein translocase subunit SecD (615 aa).

The next 6 membrane-spanning stretches (helical) occupy residues 10 to 30, 452 to 472, 477 to 497, 504 to 524, 548 to 570, and 585 to 605; these read YVMLIVVIVIGLLYALPNLFG, QGLEACLAGLLVSILFMIIFY, LIATSALIANLILIVGIMSLL, MPGIAGIVLTLAVAVDANVLI, GAFSSIFDANITTLIKVIILYAV, and GVATSMFTAIVGTRAIVNLLY.

The protein belongs to the SecD/SecF family. SecD subfamily. As to quaternary structure, forms a complex with SecF. Part of the essential Sec protein translocation apparatus which comprises SecA, SecYEG and auxiliary proteins SecDF-YajC and YidC.

It is found in the cell inner membrane. Part of the Sec protein translocase complex. Interacts with the SecYEG preprotein conducting channel. SecDF uses the proton motive force (PMF) to complete protein translocation after the ATP-dependent function of SecA. The chain is Protein translocase subunit SecD from Shigella flexneri.